The following is a 237-amino-acid chain: Large ribosomal subunit protein uL1 (237 aa).

The protein belongs to the universal ribosomal protein uL1 family. As to quaternary structure, part of the 50S ribosomal subunit.

In terms of biological role, binds directly to 23S rRNA. The L1 stalk is quite mobile in the ribosome, and is involved in E site tRNA release. Its function is as follows. Protein L1 is also a translational repressor protein, it controls the translation of the L11 operon by binding to its mRNA. This Chloroflexus aurantiacus (strain ATCC 29364 / DSM 637 / Y-400-fl) protein is Large ribosomal subunit protein uL1.